The primary structure comprises 166 residues: Regulatory protein RecX (166 aa).

This sequence belongs to the RecX family.

The protein resides in the cytoplasm. Its function is as follows. Modulates RecA activity. The protein is Regulatory protein RecX of Klebsiella pneumoniae (strain 342).